The following is a 248-amino-acid chain: ATP synthase subunit a, chloroplastic (248 aa).

The next 5 helical transmembrane spans lie at 37–57 (GQVL…AFLG), 96–116 (VPFV…GALV), 135–155 (INTT…AGFH), 200–220 (LVVA…MMFL), and 221–241 (GLFT…AYIG).

The protein belongs to the ATPase A chain family. F-type ATPases have 2 components, CF(1) - the catalytic core - and CF(0) - the membrane proton channel. CF(1) has five subunits: alpha(3), beta(3), gamma(1), delta(1), epsilon(1). CF(0) has four main subunits: a, b, b' and c.

The protein localises to the plastid. The protein resides in the chloroplast thylakoid membrane. In terms of biological role, key component of the proton channel; it plays a direct role in the translocation of protons across the membrane. This chain is ATP synthase subunit a, chloroplastic, found in Staurastrum punctulatum (Green alga).